A 444-amino-acid chain; its full sequence is Tol-Pal system protein TolB (444 aa).

An N-terminal signal peptide occupies residues 1-18; the sequence is MKNIIYCILLLFSFNSYA.

The protein belongs to the TolB family. The Tol-Pal system is composed of five core proteins: the inner membrane proteins TolA, TolQ and TolR, the periplasmic protein TolB and the outer membrane protein Pal. They form a network linking the inner and outer membranes and the peptidoglycan layer.

Its subcellular location is the periplasm. Part of the Tol-Pal system, which plays a role in outer membrane invagination during cell division and is important for maintaining outer membrane integrity. This Rickettsia bellii (strain OSU 85-389) protein is Tol-Pal system protein TolB.